The chain runs to 87 residues: Neurotoxin Cex4 (87 aa).

The signal sequence occupies residues 1-19 (MNSLLMITACLFLIGTVWA). Residues 20–85 (KEGYLVNKST…TYPLPNKSCG (66 aa)) enclose the LCN-type CS-alpha/beta domain. Intrachain disulfides connect Cys31–Cys84, Cys35–Cys60, Cys44–Cys65, and Cys48–Cys67. A Cysteine amide modification is found at Cys84. Positions 85–87 (GRK) are excised as a propeptide.

It belongs to the long (4 C-C) scorpion toxin superfamily. Sodium channel inhibitor family. Beta subfamily. As to expression, expressed by the venom gland.

The protein localises to the secreted. Its function is as follows. Beta toxins bind voltage-independently at site-4 of sodium channels (Nav) and shift the voltage of activation toward more negative potentials thereby affecting sodium channel activation and promoting spontaneous and repetitive firing. This Centruroides exilicauda (Bark scorpion) protein is Neurotoxin Cex4.